We begin with the raw amino-acid sequence, 486 residues long: MVQRLLPGAHICRRSFNSSAIIKSSALTLKEALENVIPKKRDAVKKLKACYGSTFVGPITISSVLGGMRGNQSMFWQGTSLDPEHGIKFQGLTIEECQNRLPNTGIDGDNFLPESMLWLLMTGGVPTFQQAASFRKELAIRGRKLPHYTEKVLSSLPKDMHPMTQLAIGLASMNKGSLFATNYQKGLIGKMEFWKDTLEDSLNLIASLPLLTGRIYSNITNEGHPLGQYSEEVDWCTNICSLLGMTNGTNSSNTCNLTSQQSLDFINLMRLYTGIHVDHEGGNVSAHTTHLVGSALSDPYLSYSSGIMGLAGPLHGLAAQEVVRFLIEMNSNISSIAREQEIKDYLWKILNSNRVIPGYGHAVLRKPDPRFTAMLEFAQKRPIEFENDKNVLLMQKLAEIAPKVLLEHGKSKNPFPNVDSASGILFYHYGIRELLFFTVIFGCSRAMGPLTQLVWDRILGLPIERPKSLNLEGLEALTKASNVNKL.

The transit peptide at Met1–Lys23 directs the protein to the mitochondrion. Catalysis depends on residues His315, His361, and Asp419. The Microbody targeting signal signature appears at Asn484–Leu486.

Belongs to the citrate synthase family.

Its subcellular location is the mitochondrion. It carries out the reaction oxaloacetate + acetyl-CoA + H2O = citrate + CoA + H(+). The protein operates within carbohydrate metabolism; tricarboxylic acid cycle; isocitrate from oxaloacetate: step 1/2. Its function is as follows. Dual specificity mitochondrial citrate and methylcitrate synthase with similar catalytic efficiency with both acetyl-CoA and propionyl-CoA. The protein is Citrate synthase 3, mitochondrial of Saccharomyces cerevisiae (strain ATCC 204508 / S288c) (Baker's yeast).